The chain runs to 209 residues: Large ribosomal subunit protein bL25 (209 aa).

The protein belongs to the bacterial ribosomal protein bL25 family. CTC subfamily. Part of the 50S ribosomal subunit; part of the 5S rRNA/L5/L18/L25 subcomplex. Contacts the 5S rRNA. Binds to the 5S rRNA independently of L5 and L18.

Its function is as follows. This is one of the proteins that binds to the 5S RNA in the ribosome where it forms part of the central protuberance. The protein is Large ribosomal subunit protein bL25 of Xanthomonas campestris pv. campestris (strain 8004).